The sequence spans 115 residues: Holo-[acyl-carrier-protein] synthase (115 aa).

D8 and E50 together coordinate Mg(2+).

It belongs to the P-Pant transferase superfamily. AcpS family. It depends on Mg(2+) as a cofactor.

The protein localises to the cytoplasm. It carries out the reaction apo-[ACP] + CoA = holo-[ACP] + adenosine 3',5'-bisphosphate + H(+). Functionally, transfers the 4'-phosphopantetheine moiety from coenzyme A to a Ser of acyl-carrier-protein. The polypeptide is Holo-[acyl-carrier-protein] synthase (Pseudarthrobacter chlorophenolicus (strain ATCC 700700 / DSM 12829 / CIP 107037 / JCM 12360 / KCTC 9906 / NCIMB 13794 / A6) (Arthrobacter chlorophenolicus)).